The chain runs to 109 residues: Large ribosomal subunit protein uL18c (109 aa).

It belongs to the universal ribosomal protein uL18 family. In terms of assembly, part of the 50S ribosomal subunit; contacts the 5S rRNA.

Its subcellular location is the plastid. It localises to the chloroplast. In terms of biological role, binds 5S rRNA, forms part of the central protuberance of the 50S subunit. The chain is Large ribosomal subunit protein uL18c (rpl18) from Cyanidioschyzon merolae (strain NIES-3377 / 10D) (Unicellular red alga).